The following is a 363-amino-acid chain: Ribosomal RNA large subunit methyltransferase M (363 aa).

S-adenosyl-L-methionine-binding positions include serine 190, 223-226 (CPGG), aspartate 242, aspartate 262, and aspartate 280. Lysine 309 (proton acceptor) is an active-site residue.

The protein belongs to the class I-like SAM-binding methyltransferase superfamily. RNA methyltransferase RlmE family. RlmM subfamily. As to quaternary structure, monomer.

It localises to the cytoplasm. It catalyses the reaction cytidine(2498) in 23S rRNA + S-adenosyl-L-methionine = 2'-O-methylcytidine(2498) in 23S rRNA + S-adenosyl-L-homocysteine + H(+). In terms of biological role, catalyzes the 2'-O-methylation at nucleotide C2498 in 23S rRNA. This chain is Ribosomal RNA large subunit methyltransferase M, found in Actinobacillus pleuropneumoniae serotype 5b (strain L20).